A 235-amino-acid polypeptide reads, in one-letter code: Zinc transporter ZIP9 (235 aa).

N-linked (GlcNAc...) asparagine glycosylation occurs at N2. The next 4 membrane-spanning stretches (helical) occupy residues 11-31, 75-95, 104-124, and 138-158; these read SCVP…CWWT, TTTL…GAAA, LIVF…LVSF, and HLLV…LGLS. A glycan (N-linked (GlcNAc...) asparagine) is linked at N169. The next 2 helical transmembrane spans lie at 172-192 and 214-234; these read GMAM…HVLP and LEVA…VGHQ.

It belongs to the ZIP transporter (TC 2.A.5) family.

It is found in the golgi apparatus. The protein resides in the trans-Golgi network membrane. It localises to the cell membrane. The protein localises to the cytoplasm. Its subcellular location is the perinuclear region. It is found in the mitochondrion. The protein resides in the nucleus. The enzyme catalyses Zn(2+)(in) = Zn(2+)(out). Transports zinc ions across cell and organelle membranes into the cytoplasm and regulates intracellular zinc homeostasis. Participates in the zinc ions efflux out of the secretory compartments. Regulates intracellular zinc level, resulting in the enhancement of AKT1 and MAPK3/MAPK1 (Erk1/2) phosphorylation in response to the BCR activation. Also functions as a membrane androgen receptor that mediates, through a G protein, the non-classical androgen signaling pathway, characterized by the activation of MAPK3/MAPK1 (Erk1/2) and transcription factors CREB1 or ATF1. This pathway contributes to CLDN1 and CLDN5 expression and tight junction formation between adjacent Sertoli cells. Mediates androgen-induced vascular endothelial cell proliferation through activation of an inhibitory G protein leading to the AKT1 and MAPK3/MAPK1 (Erk1/2) activation which in turn modulate inhibition (phosphorylation) of GSK3B and CCND1 transcription. Moreover, has dual functions as a membrane-bound androgen receptor and as an androgen-dependent zinc transporter both of which are mediated through an inhibitory G protein (Gi) that mediates both MAP kinase and zinc signaling leading to the androgen-dependent apoptotic process. The protein is Zinc transporter ZIP9 of Macaca fascicularis (Crab-eating macaque).